Here is a 345-residue protein sequence, read N- to C-terminus: Nicotinate-nucleotide--dimethylbenzimidazole phosphoribosyltransferase (345 aa).

Glutamate 312 serves as the catalytic Proton acceptor.

The protein belongs to the CobT family.

It carries out the reaction 5,6-dimethylbenzimidazole + nicotinate beta-D-ribonucleotide = alpha-ribazole 5'-phosphate + nicotinate + H(+). It functions in the pathway nucleoside biosynthesis; alpha-ribazole biosynthesis; alpha-ribazole from 5,6-dimethylbenzimidazole: step 1/2. Functionally, catalyzes the synthesis of alpha-ribazole-5'-phosphate from nicotinate mononucleotide (NAMN) and 5,6-dimethylbenzimidazole (DMB). The sequence is that of Nicotinate-nucleotide--dimethylbenzimidazole phosphoribosyltransferase from Phocaeicola vulgatus (strain ATCC 8482 / DSM 1447 / JCM 5826 / CCUG 4940 / NBRC 14291 / NCTC 11154) (Bacteroides vulgatus).